A 178-amino-acid polypeptide reads, in one-letter code: Redox-sensing transcriptional repressor Rex (178 aa).

Position 59 to 64 (59 to 64 (GVGNMG)) interacts with NAD(+).

This sequence belongs to the transcriptional regulatory Rex family. In terms of assembly, homodimer.

It is found in the cytoplasm. In terms of biological role, modulates transcription in response to changes in cellular NADH/NAD(+) redox state. The polypeptide is Redox-sensing transcriptional repressor Rex (Streptococcus suis).